The chain runs to 367 residues: DNA polymerase IV (367 aa).

The region spanning 14-198 (IIHIDMDAFF…LPIAKFHGVG (185 aa)) is the UmuC domain. Mg(2+)-binding residues include Asp-18 and Asp-116. Residue Glu-117 is part of the active site.

It belongs to the DNA polymerase type-Y family. Monomer. Mg(2+) is required as a cofactor.

The protein localises to the cytoplasm. The enzyme catalyses DNA(n) + a 2'-deoxyribonucleoside 5'-triphosphate = DNA(n+1) + diphosphate. Functionally, poorly processive, error-prone DNA polymerase involved in untargeted mutagenesis. Copies undamaged DNA at stalled replication forks, which arise in vivo from mismatched or misaligned primer ends. These misaligned primers can be extended by PolIV. Exhibits no 3'-5' exonuclease (proofreading) activity. May be involved in translesional synthesis, in conjunction with the beta clamp from PolIII. In Streptococcus thermophilus (strain ATCC BAA-491 / LMD-9), this protein is DNA polymerase IV.